The chain runs to 276 residues: Bis(5'-nucleosyl)-tetraphosphatase, symmetrical (276 aa).

It belongs to the Ap4A hydrolase family.

The enzyme catalyses P(1),P(4)-bis(5'-adenosyl) tetraphosphate + H2O = 2 ADP + 2 H(+). Its function is as follows. Hydrolyzes diadenosine 5',5'''-P1,P4-tetraphosphate to yield ADP. This chain is Bis(5'-nucleosyl)-tetraphosphatase, symmetrical, found in Tolumonas auensis (strain DSM 9187 / NBRC 110442 / TA 4).